The chain runs to 235 residues: Casparian strip membrane protein 2 (235 aa).

Topologically, residues 1-70 (MTSESATVIQ…RSGAEGFRRC (70 aa)) are cytoplasmic. Residues 71 to 91 (LAVIDFLLRVAAFGPTLAAAI) traverse the membrane as a helical segment. The Extracellular portion of the chain corresponds to 92–118 (STGTADERLSVFTNFFQFHARFDDFPA). The helical transmembrane segment at 119-139 (FTFFLVANAVAAGYLVLSLPF) threads the bilayer. Residues 140–162 (SVVVILRPNKATGGVRLLLLLCD) are Cytoplasmic-facing. The helical transmembrane segment at 163–183 (VLIMALLTAAGAAAAAIVYVA) threads the bilayer. The Extracellular segment spans residues 184-210 (HSGNRRANWVPICMQFHGFCQRTSGSV). The chain crosses the membrane as a helical span at residues 211-231 (VATFLAVLVFIVLILMAACVI). The Cytoplasmic segment spans residues 232 to 235 (RRSK).

The protein belongs to the Casparian strip membrane proteins (CASP) family. Homodimer and heterodimers.

The protein localises to the cell membrane. Its function is as follows. Regulates membrane-cell wall junctions and localized cell wall deposition. Required for establishment of the Casparian strip membrane domain (CSD) and the subsequent formation of Casparian strips, a cell wall modification of the root endodermis that determines an apoplastic barrier between the intraorganismal apoplasm and the extraorganismal apoplasm and prevents lateral diffusion. This is Casparian strip membrane protein 2 from Sorghum bicolor (Sorghum).